Here is a 509-residue protein sequence, read N- to C-terminus: ATP synthase subunit alpha (509 aa).

Gly169–Thr176 is a binding site for ATP.

This sequence belongs to the ATPase alpha/beta chains family. F-type ATPases have 2 components, CF(1) - the catalytic core - and CF(0) - the membrane proton channel. CF(1) has five subunits: alpha(3), beta(3), gamma(1), delta(1), epsilon(1). CF(0) has three main subunits: a(1), b(2) and c(9-12). The alpha and beta chains form an alternating ring which encloses part of the gamma chain. CF(1) is attached to CF(0) by a central stalk formed by the gamma and epsilon chains, while a peripheral stalk is formed by the delta and b chains.

Its subcellular location is the cell inner membrane. It catalyses the reaction ATP + H2O + 4 H(+)(in) = ADP + phosphate + 5 H(+)(out). Its function is as follows. Produces ATP from ADP in the presence of a proton gradient across the membrane. The alpha chain is a regulatory subunit. This is ATP synthase subunit alpha from Methylocella silvestris (strain DSM 15510 / CIP 108128 / LMG 27833 / NCIMB 13906 / BL2).